Consider the following 20-residue polypeptide: Major extrapallial fluid protein (20 aa).

The tract at residues 1–20 (NPVDDHHDDHHDAPIVEHHD) is disordered.

In terms of assembly, homodimer. In terms of processing, glycosylated.

Appears to be a building block of the soluble organic matrix of the shell. The protein binds calcium. In Mytilus edulis (Blue mussel), this protein is Major extrapallial fluid protein.